Reading from the N-terminus, the 87-residue chain is Cell division topological specificity factor (87 aa).

The protein belongs to the MinE family.

In terms of biological role, prevents the cell division inhibition by proteins MinC and MinD at internal division sites while permitting inhibition at polar sites. This ensures cell division at the proper site by restricting the formation of a division septum at the midpoint of the long axis of the cell. This chain is Cell division topological specificity factor, found in Herpetosiphon aurantiacus (strain ATCC 23779 / DSM 785 / 114-95).